The sequence spans 129 residues: Small ribosomal subunit protein uS11 (129 aa).

Belongs to the universal ribosomal protein uS11 family. As to quaternary structure, part of the 30S ribosomal subunit. Interacts with proteins S7 and S18. Binds to IF-3.

Its function is as follows. Located on the platform of the 30S subunit, it bridges several disparate RNA helices of the 16S rRNA. Forms part of the Shine-Dalgarno cleft in the 70S ribosome. This Pectobacterium atrosepticum (strain SCRI 1043 / ATCC BAA-672) (Erwinia carotovora subsp. atroseptica) protein is Small ribosomal subunit protein uS11.